The chain runs to 154 residues: uncharacterized protein (154 aa).

4 consecutive transmembrane segments (helical) span residues phenylalanine 20–glycine 42, phenylalanine 62–leucine 84, alanine 91–tyrosine 109, and isoleucine 113–methionine 132.

The protein localises to the cell membrane. This is an uncharacterized protein from Bacillus subtilis (strain 168).